The primary structure comprises 118 residues: Large ribosomal subunit protein uL18 (118 aa).

It belongs to the universal ribosomal protein uL18 family. Part of the 50S ribosomal subunit; part of the 5S rRNA/L5/L18/L25 subcomplex. Contacts the 5S and 23S rRNAs.

Its function is as follows. This is one of the proteins that bind and probably mediate the attachment of the 5S RNA into the large ribosomal subunit, where it forms part of the central protuberance. The chain is Large ribosomal subunit protein uL18 from Dechloromonas aromatica (strain RCB).